The sequence spans 217 residues: Ribosomal RNA small subunit methyltransferase G (217 aa).

Residues G76, F81, L128–E129, and R142 each bind S-adenosyl-L-methionine.

The protein belongs to the methyltransferase superfamily. RNA methyltransferase RsmG family.

The protein resides in the cytoplasm. It carries out the reaction guanosine(527) in 16S rRNA + S-adenosyl-L-methionine = N(7)-methylguanosine(527) in 16S rRNA + S-adenosyl-L-homocysteine. Its function is as follows. Specifically methylates the N7 position of guanine in position 527 of 16S rRNA. The protein is Ribosomal RNA small subunit methyltransferase G of Rhizorhabdus wittichii (strain DSM 6014 / CCUG 31198 / JCM 15750 / NBRC 105917 / EY 4224 / RW1) (Sphingomonas wittichii).